A 259-amino-acid chain; its full sequence is MPGANYRAGAGAGAGARRPRGARDREEDGGGLEPAAVARDLLRGTSNMSFEELLELQSQVGTKTYKQLVAGNSPKKQASRPPIQNACVADKHRPLEMSAKIRVPFLRQVVPISKKVARDPRFDDLSGEYNPEVFDKTYQFLNDIRAKEKELVKKQLKKHLSGEEHEKLQQLLQRMEQQEMAQQERKQQQELHLALKQERRAQAQQGHRPYFLKKSEQRQLALAEKFKELKRSKKLENFLSRKRRRNAGKDRRHLPLSKE.

The interval 1–38 is disordered; the sequence is MPGANYRAGAGAGAGARRPRGARDREEDGGGLEPAAVA. Residue serine 73 is modified to Phosphoserine. Positions 157 to 205 form a coiled coil; the sequence is KKHLSGEEHEKLQQLLQRMEQQEMAQQERKQQQELHLALKQERRAQAQQ. The disordered stretch occupies residues 233–259; sequence KKLENFLSRKRRRNAGKDRRHLPLSKE. Residues 240–259 are compositionally biased toward basic residues; sequence SRKRRRNAGKDRRHLPLSKE. A Nuclear localization signal motif is present at residues 241–244; that stretch reads RKRR.

The protein belongs to the RRP36 family.

It is found in the nucleus. The protein resides in the nucleolus. Involved in the early processing steps of the pre-rRNA in the maturation pathway leading to the 18S rRNA. The sequence is that of Ribosomal RNA processing protein 36 homolog (RRP36) from Homo sapiens (Human).